We begin with the raw amino-acid sequence, 351 residues long: Photosystem II D2 protein (351 aa).

Residues 39 to 59 (TAYLAVGGWFTGTTFVTSWYT) traverse the membrane as a helical segment. Histidine 116 serves as a coordination point for chlorophyll a. A helical membrane pass occupies residues 123–139 (GFCLRQFEIARLVGIRP). Pheophytin a-binding residues include glutamine 128 and asparagine 141. A helical transmembrane segment spans residues 151-164 (IFVSVFLLYPLGQA). Position 196 (histidine 196) interacts with chlorophyll a. A helical transmembrane segment spans residues 206-226 (GALLCAIHGATVENTLFEDGD). A plastoquinone-binding residues include histidine 213 and phenylalanine 260. Histidine 213 is a binding site for Fe cation. Histidine 267 provides a ligand contact to Fe cation. The chain crosses the membrane as a helical span at residues 277 to 293 (GLWTSAIGIVGLALNLR).

This sequence belongs to the reaction center PufL/M/PsbA/D family. In terms of assembly, PSII is composed of 1 copy each of membrane proteins PsbA, PsbB, PsbC, PsbD, PsbE, PsbF, PsbH, PsbI, PsbJ, PsbK, PsbL, PsbM, PsbT, PsbX, PsbY, PsbZ, Psb30/Ycf12, at least 3 peripheral proteins of the oxygen-evolving complex and a large number of cofactors. It forms dimeric complexes. The cofactor is The D1/D2 heterodimer binds P680, chlorophylls that are the primary electron donor of PSII, and subsequent electron acceptors. It shares a non-heme iron and each subunit binds pheophytin, quinone, additional chlorophylls, carotenoids and lipids. There is also a Cl(-1) ion associated with D1 and D2, which is required for oxygen evolution. The PSII complex binds additional chlorophylls, carotenoids and specific lipids..

It is found in the plastid. The protein localises to the chloroplast thylakoid membrane. It catalyses the reaction 2 a plastoquinone + 4 hnu + 2 H2O = 2 a plastoquinol + O2. Functionally, photosystem II (PSII) is a light-driven water:plastoquinone oxidoreductase that uses light energy to abstract electrons from H(2)O, generating O(2) and a proton gradient subsequently used for ATP formation. It consists of a core antenna complex that captures photons, and an electron transfer chain that converts photonic excitation into a charge separation. The D1/D2 (PsbA/PsbD) reaction center heterodimer binds P680, the primary electron donor of PSII as well as several subsequent electron acceptors. D2 is needed for assembly of a stable PSII complex. The chain is Photosystem II D2 protein from Heterosigma akashiwo (strain NIES-293 / 8280G21-1).